We begin with the raw amino-acid sequence, 104 residues long: NADH-quinone oxidoreductase subunit K (104 aa).

The next 3 helical transmembrane spans lie at 4 to 24, 31 to 51, and 67 to 87; these read VPASAYLTLAIILFCIGLFGA, VIVLVCIELMLNAANLNLVAF, and LFTMSVAAAEAAVGLAILIAL.

This sequence belongs to the complex I subunit 4L family. In terms of assembly, NDH-1 is composed of 14 different subunits. Subunits NuoA, H, J, K, L, M, N constitute the membrane sector of the complex.

The protein resides in the cell membrane. It carries out the reaction a quinone + NADH + 5 H(+)(in) = a quinol + NAD(+) + 4 H(+)(out). NDH-1 shuttles electrons from NADH, via FMN and iron-sulfur (Fe-S) centers, to quinones in the respiratory chain. The immediate electron acceptor for the enzyme in this species is believed to be a menaquinone. Couples the redox reaction to proton translocation (for every two electrons transferred, four hydrogen ions are translocated across the cytoplasmic membrane), and thus conserves the redox energy in a proton gradient. This Bacillus mycoides (strain KBAB4) (Bacillus weihenstephanensis) protein is NADH-quinone oxidoreductase subunit K.